The following is a 585-amino-acid chain: Potassium-transporting ATPase potassium-binding subunit (585 aa).

A run of 12 helical transmembrane segments spans residues 25–45 (IIIF…SFYI), 84–104 (YFIN…LVIM), 152–172 (FVIT…SMAF), 194–214 (IFDL…LAGV), 275–295 (LEFV…GIVF), 307–327 (VIMF…YVGV), 345–365 (AIGV…STGA), 368–388 (GALV…LLLN), 397–417 (GVLN…LMVG), 437–457 (LSLV…LMIP), 502–522 (LDGV…LVIA), and 547–567 (LLLI…IIVL).

The protein belongs to the KdpA family. The system is composed of three essential subunits: KdpA, KdpB and KdpC.

The protein localises to the cell membrane. In terms of biological role, part of the high-affinity ATP-driven potassium transport (or Kdp) system, which catalyzes the hydrolysis of ATP coupled with the electrogenic transport of potassium into the cytoplasm. This subunit binds the extracellular potassium ions and delivers the ions to the membrane domain of KdpB through an intramembrane tunnel. The sequence is that of Potassium-transporting ATPase potassium-binding subunit from Thermoplasma volcanium (strain ATCC 51530 / DSM 4299 / JCM 9571 / NBRC 15438 / GSS1).